The chain runs to 27 residues: rRNA/tRNA 2'-O-methyltransferase fibrillarin (27 aa).

Positions Xaa1 to Gly12 are enriched in gly residues. Positions Xaa1–Gly27 are disordered. Asymmetric dimethylarginine occurs at positions 5, 11, 16, and 19.

It belongs to the methyltransferase superfamily. Fibrillarin family. As to quaternary structure, component of box C/D small nucleolar ribonucleoprotein (snoRNP) particles. It is associated with the U3, U8 and U13 small nuclear RNAs.

The protein resides in the nucleus. It is found in the nucleolus. The catalysed reaction is L-glutaminyl-[histone H2A] + S-adenosyl-L-methionine = N(5)-methyl-L-glutaminyl-[histone H2A] + S-adenosyl-L-homocysteine + H(+). S-adenosyl-L-methionine-dependent methyltransferase that has the ability to methylate both RNAs and proteins. Involved in pre-rRNA processing. Utilizes the methyl donor S-adenosyl-L-methionine to catalyze the site-specific 2'-hydroxyl methylation of ribose moieties in pre-ribosomal RNA. Site specificity is provided by a guide RNA that base pairs with the substrate. Methylation occurs at a characteristic distance from the sequence involved in base pairing with the guide RNA. Also acts as a protein methyltransferase by mediating methylation of 'Gln-105' of histone H2A (H2AQ105me), a modification that impairs binding of the FACT complex and is specifically present at 35S ribosomal DNA locus. In Physarum polycephalum (Slime mold), this protein is rRNA/tRNA 2'-O-methyltransferase fibrillarin.